Here is a 73-residue protein sequence, read N- to C-terminus: Large ribosomal subunit protein bL31 (73 aa).

Positions 16, 18, 38, and 41 each coordinate Zn(2+).

The protein belongs to the bacterial ribosomal protein bL31 family. Type A subfamily. In terms of assembly, part of the 50S ribosomal subunit. Requires Zn(2+) as cofactor.

Binds the 23S rRNA. The chain is Large ribosomal subunit protein bL31 from Streptomyces avermitilis (strain ATCC 31267 / DSM 46492 / JCM 5070 / NBRC 14893 / NCIMB 12804 / NRRL 8165 / MA-4680).